We begin with the raw amino-acid sequence, 337 residues long: DNA-directed RNA polymerase subunit alpha (337 aa).

Residues 1–233 (MVREKVTVST…DLFIPFLHIE (233 aa)) form an alpha N-terminal domain (alpha-NTD) region. The tract at residues 265 to 337 (KKIALKSIFI…FVIDLAKNEF (73 aa)) is alpha C-terminal domain (alpha-CTD).

The protein belongs to the RNA polymerase alpha chain family. As to quaternary structure, in plastids the minimal PEP RNA polymerase catalytic core is composed of four subunits: alpha, beta, beta', and beta''. When a (nuclear-encoded) sigma factor is associated with the core the holoenzyme is formed, which can initiate transcription.

The protein localises to the plastid. Its subcellular location is the chloroplast. The catalysed reaction is RNA(n) + a ribonucleoside 5'-triphosphate = RNA(n+1) + diphosphate. Functionally, DNA-dependent RNA polymerase catalyzes the transcription of DNA into RNA using the four ribonucleoside triphosphates as substrates. The sequence is that of DNA-directed RNA polymerase subunit alpha from Nicotiana tomentosiformis (Tobacco).